The chain runs to 196 residues: Putative NADH dehydrogenase/NAD(P)H nitroreductase Rpal_4764 (196 aa).

This sequence belongs to the nitroreductase family. HadB/RutE subfamily. It depends on FMN as a cofactor.

The sequence is that of Putative NADH dehydrogenase/NAD(P)H nitroreductase Rpal_4764 from Rhodopseudomonas palustris (strain TIE-1).